We begin with the raw amino-acid sequence, 137 residues long: Leaf-specific thionin DB4 (137 aa).

Positions 1 to 28 (MAPSKSIKSVVICVLILGLVLEQVQVEG) are cleaved as a signal peptide. Intrachain disulfides connect Cys31-Cys68, Cys32-Cys60, Cys40-Cys58, and Cys44-Cys54. A propeptide spans 75 to 137 (LNLLPESGEP…DGAVIQSVEA (63 aa)) (acidic domain).

It belongs to the plant thionin (TC 1.C.44) family. 4 C-C subfamily.

It localises to the secreted. Thionins are small plant proteins which are toxic to animal cells. They seem to exert their toxic effect at the level of the cell membrane. Their precise function is not known. This is Leaf-specific thionin DB4 (THI1.3) from Hordeum vulgare (Barley).